We begin with the raw amino-acid sequence, 294 residues long: Syntaxin-19 (294 aa).

Positions 209–271 (LSEIEQRHKE…NNTKEKFGLA (63 aa)) constitute a t-SNARE coiled-coil homology domain.

Belongs to the syntaxin family. Interacts with EGFR.

The protein resides in the cell membrane. The protein localises to the cytoplasm. In terms of biological role, plays a role in endosomal trafficking of the epidermal growth factor receptor (EGFR). The sequence is that of Syntaxin-19 (STX19) from Pongo abelii (Sumatran orangutan).